We begin with the raw amino-acid sequence, 330 residues long: Ferredoxin--NADP reductase (330 aa).

7 residues coordinate FAD: Glu35, Gln43, Tyr48, Val90, Phe123, Asp285, and Thr326.

It belongs to the ferredoxin--NADP reductase type 2 family. As to quaternary structure, homodimer. Requires FAD as cofactor.

The catalysed reaction is 2 reduced [2Fe-2S]-[ferredoxin] + NADP(+) + H(+) = 2 oxidized [2Fe-2S]-[ferredoxin] + NADPH. This chain is Ferredoxin--NADP reductase, found in Streptococcus pyogenes serotype M6 (strain ATCC BAA-946 / MGAS10394).